Reading from the N-terminus, the 582-residue chain is Protein bps2 (582 aa).

ATP is bound at residue 28–35 (APNAYGKT). Positions 243-281 (RQSYERQLQEINAQLQKITAQRNEAEIEIRLLEKVLDQI) form a coiled coil. Positions 243-351 (RQSYERQLQE…KLKELDQISS (109 aa)) constitute a Zinc-hook domain. Cysteine 292 and cysteine 295 together coordinate Zn(2+). Positions 320–351 (SLYAGIKKEADELLSKKSEIEKKLKELDQISS) form a coiled coil.

The polypeptide is Protein bps2 (bps2) (Acidianus ambivalens (Desulfurolobus ambivalens)).